Consider the following 576-residue polypeptide: Alkaline phosphatase PhoD (576 aa).

The signal sequence occupies residues 1-32 (MNSLLHHSFLKTVFSSLAIAIVTSSLSSVTIA). Residues aspartate 68 and threonine 107 each coordinate Zn(2+). The active-site Phosphothreonine intermediate is threonine 107. Cysteine 108 and cysteine 144 form a disulfide bridge. Residues asparagine 128 and 188–190 (KDR) contribute to the substrate site. The cysteines at positions 248 and 332 are disulfide-linked. 5 residues coordinate Zn(2+): aspartate 318, histidine 322, aspartate 363, histidine 364, and histidine 508. Cysteine 562 and cysteine 573 are joined by a disulfide.

Monomer. Zn(2+) serves as cofactor.

It catalyses the reaction a phosphate monoester + H2O = an alcohol + phosphate. In terms of biological role, alkaline phosphatase with broad substrate specificity. Has phosphatase activity towards nucleotide and sugar phosphates with a preference to nucleotide phosphates. Has no phosphodiesterase activity. The polypeptide is Alkaline phosphatase PhoD (Zymomonas mobilis subsp. mobilis (strain ATCC 31821 / ZM4 / CP4)).